Here is a 473-residue protein sequence, read N- to C-terminus: Keratin, type I cuticular Ha6 (473 aa).

A head region spans residues 1–93 (MATQICTPTF…FCEGAFNGNE (93 aa)). In terms of domain architecture, IF rod spans 93-404 (EKATMQILND…RLLDGEDCKL (312 aa)). Positions 94 to 128 (KATMQILNDRLANYLEKVRQLEQENTQLECRIREW) are coil 1A. The segment at 129–139 (YECQIPYICPD) is linker 1. The tract at residues 140-240 (YQSYFKTAEE…HEEEVNALRS (101 aa)) is coil 1B. Residues 241-256 (QLGDRLNVEVDAAPPV) form a linker 12 region. Residues 257–400 (DLNKILDDMR…ATYRRLLDGE (144 aa)) are coil 2. The tail stretch occupies residues 401–473 (DCKLPAHPCS…SREHVVPRAM (73 aa)).

This sequence belongs to the intermediate filament family. As to quaternary structure, heterotetramer of two type I and two type II keratins. As to expression, in skin, only expressed in the suprabasal cells of tail scale epidermis. Suprabasally expressed in stratified squamous epithelia and also in the posterior unit of the complex filiform papillae of tongue. Expressed in rare anatomical sites in which an orthokeratinized stratum corneum would be too soft and a hard keratinized structure would be too rigid to meet the functional requirement of the respective epithelia.

The polypeptide is Keratin, type I cuticular Ha6 (Mus musculus (Mouse)).